We begin with the raw amino-acid sequence, 93 residues long: Small ribosomal subunit protein uS19 (93 aa).

Belongs to the universal ribosomal protein uS19 family.

Functionally, protein S19 forms a complex with S13 that binds strongly to the 16S ribosomal RNA. The polypeptide is Small ribosomal subunit protein uS19 (Desulfitobacterium hafniense (strain DSM 10664 / DCB-2)).